The sequence spans 504 residues: GTPase Der (504 aa).

The EngA-type G 1 domain occupies 3-166 (PVVALVGRPN…QVLAPLAEKL (164 aa)). GTP contacts are provided by residues 9–16 (GRPNVGKS), 56–60 (DTGGI), and 118–121 (NKTD). The interval 171 to 190 (VDSDENVADDEQDEWDSDFD) is disordered. Residues 172–190 (DSDENVADDEQDEWDSDFD) show a composition bias toward acidic residues. The region spanning 216-389 (IKIAIVGRPN…SIQEAYQCAT (174 aa)) is the EngA-type G 2 domain. Residues 222–229 (GRPNVGKS), 269–273 (DTAGV), and 334–337 (NKWD) each bind GTP. The region spanning 390–474 (KKMTTSMLTR…PIRVLFQEGN (85 aa)) is the KH-like domain.

It belongs to the TRAFAC class TrmE-Era-EngA-EngB-Septin-like GTPase superfamily. EngA (Der) GTPase family. Associates with the 50S ribosomal subunit.

GTPase that plays an essential role in the late steps of ribosome biogenesis. This chain is GTPase Der, found in Glaesserella parasuis serovar 5 (strain SH0165) (Haemophilus parasuis).